The following is a 251-amino-acid chain: Probable transcriptional regulatory protein Cgl1663/cg1872 (251 aa).

The disordered stretch occupies residues 1 to 22 (MSGHSKWATTKHKKAANDAKRG).

Belongs to the TACO1 family.

It is found in the cytoplasm. In Corynebacterium glutamicum (strain ATCC 13032 / DSM 20300 / JCM 1318 / BCRC 11384 / CCUG 27702 / LMG 3730 / NBRC 12168 / NCIMB 10025 / NRRL B-2784 / 534), this protein is Probable transcriptional regulatory protein Cgl1663/cg1872.